A 768-amino-acid chain; its full sequence is Dual specificity calcium/calmodulin-dependent 3',5'-cyclic nucleotide phosphodiesterase 1C (768 aa).

N-acetylmethionine is present on methionine 1. The tract at residues 183-206 (EKPRFKSIVHAVQAGIFVERMYRR) is calmodulin-binding. A PDEase domain is found at 211–588 (VGLSYPPAVI…ERWRAKVPKE (378 aa)). Catalysis depends on histidine 288, which acts as the Proton donor. Residues histidine 292, histidine 328, aspartate 329, and aspartate 436 each contribute to the Zn(2+) site. Residue aspartate 329 coordinates Mg(2+). 2 disordered regions span residues 513–557 (LIDE…INNS) and 584–719 (KVPK…PPLR). 2 stretches are compositionally biased toward polar residues: residues 516–536 (ETSQ…INSS) and 543–557 (VKSS…INNS). Basic and acidic residues predominate over residues 584–614 (KVPKEEKAKKEAEEKARLAAEEKQKEMEAKS). Residues 631–641 (ETKGQVNGTRT) show a composition bias toward polar residues. 2 stretches are compositionally biased toward basic and acidic residues: residues 642 to 659 (SKGD…KAGE) and 665 to 692 (DLKD…DGTK). Residues 698–712 (SPAPSTSSTSRLTLP) are compositionally biased toward low complexity.

This sequence belongs to the cyclic nucleotide phosphodiesterase family. PDE1 subfamily. In terms of assembly, homodimer. It depends on Zn(2+) as a cofactor. Requires Mg(2+) as cofactor. In terms of tissue distribution, highly expressed in olfactory epithelium and at moderate levels, in cerebellum, as well as weakly in forebrain, testis, heart and lung. In the olfactory epithelium, expressed by sensory neurons, but not epithelial cells.

The protein resides in the lysosome. The catalysed reaction is a nucleoside 3',5'-cyclic phosphate + H2O = a nucleoside 5'-phosphate + H(+). It catalyses the reaction 3',5'-cyclic GMP + H2O = GMP + H(+). It carries out the reaction 3',5'-cyclic AMP + H2O = AMP + H(+). Its activity is regulated as follows. Type I PDE are activated by the binding of calmodulin in the presence of Ca(2+). Calmodulin-dependent cyclic nucleotide phosphodiesterase with a dual specificity for the second messengers cAMP and cGMP, which are key regulators of many important physiological processes. Has a high affinity for both cAMP and cGMP. Modulates the amplitude and duration of the cAMP signal in sensory cilia in response to odorant stimulation, hence contributing to the generation of action potentials. Regulates smooth muscle cell proliferation. Regulates the stability of growth factor receptors, including PDGFRB. This Rattus norvegicus (Rat) protein is Dual specificity calcium/calmodulin-dependent 3',5'-cyclic nucleotide phosphodiesterase 1C.